Here is a 244-residue protein sequence, read N- to C-terminus: MSQPLLALNWKMNKTPSEARAWAADLSSALTPGNAELAVLAPAIDLPVLAGALPAGVALGGQDVSRFAAGAYTGEISAAMLRDVGATYVIVGHSERRTYHAETDAVVAAKARQAQAAGLIPIVCVGESLDVRERGAQVDFTLDQLRGSTEGVGENLIVAYEPVWAIGTGKTATADDAEELAAAIREALAGLYTAEARSFRILYGGSVKPDNIASICAQPNVNGALVGGASLNVADVVAMSDALR.

A substrate-binding site is contributed by 9–11; sequence NWK. The active-site Electrophile is the histidine 93. The active-site Proton acceptor is glutamate 161. Substrate contacts are provided by residues glycine 167, serine 206, and 227–228; that span reads GG.

This sequence belongs to the triosephosphate isomerase family. As to quaternary structure, homodimer.

It is found in the cytoplasm. The enzyme catalyses D-glyceraldehyde 3-phosphate = dihydroxyacetone phosphate. Its pathway is carbohydrate biosynthesis; gluconeogenesis. The protein operates within carbohydrate degradation; glycolysis; D-glyceraldehyde 3-phosphate from glycerone phosphate: step 1/1. In terms of biological role, involved in the gluconeogenesis. Catalyzes stereospecifically the conversion of dihydroxyacetone phosphate (DHAP) to D-glyceraldehyde-3-phosphate (G3P). This chain is Triosephosphate isomerase, found in Deinococcus geothermalis (strain DSM 11300 / CIP 105573 / AG-3a).